A 215-amino-acid polypeptide reads, in one-letter code: Sec-independent protein translocase protein TatB (215 aa).

Residues 1 to 21 (MLDIGWTELVVIAIVLIIVVG) form a helical membrane-spanning segment. Disordered regions lie at residues 95–119 (DLQK…EPVN) and 138–215 (AVSS…KGDA). Over residues 145-157 (QMDRAADVPKASE) the composition is skewed to basic and acidic residues. Positions 203-215 (SKTRAASRKKGDA) are enriched in basic residues.

The protein belongs to the TatB family. As to quaternary structure, the Tat system comprises two distinct complexes: a TatABC complex, containing multiple copies of TatA, TatB and TatC subunits, and a separate TatA complex, containing only TatA subunits. Substrates initially bind to the TatABC complex, which probably triggers association of the separate TatA complex to form the active translocon.

It is found in the cell inner membrane. Part of the twin-arginine translocation (Tat) system that transports large folded proteins containing a characteristic twin-arginine motif in their signal peptide across membranes. Together with TatC, TatB is part of a receptor directly interacting with Tat signal peptides. TatB may form an oligomeric binding site that transiently accommodates folded Tat precursor proteins before their translocation. This chain is Sec-independent protein translocase protein TatB, found in Rhizobium meliloti (strain 1021) (Ensifer meliloti).